We begin with the raw amino-acid sequence, 130 residues long: DNA-directed RNA polymerase subunit omega (130 aa).

The interval threonine 108–glutamate 130 is disordered.

It belongs to the RNA polymerase subunit omega family. As to quaternary structure, the RNAP catalytic core consists of 2 alpha, 1 beta, 1 beta' and 1 omega subunit. When a sigma factor is associated with the core the holoenzyme is formed, which can initiate transcription.

It carries out the reaction RNA(n) + a ribonucleoside 5'-triphosphate = RNA(n+1) + diphosphate. Its function is as follows. Promotes RNA polymerase assembly. Latches the N- and C-terminal regions of the beta' subunit thereby facilitating its interaction with the beta and alpha subunits. The chain is DNA-directed RNA polymerase subunit omega from Rhodopseudomonas palustris (strain ATCC BAA-98 / CGA009).